The primary structure comprises 377 residues: Nitric oxide reductase FlRd-NAD(+) reductase (377 aa).

Belongs to the FAD-dependent oxidoreductase family. The cofactor is FAD.

It localises to the cytoplasm. It catalyses the reaction 2 reduced [nitric oxide reductase rubredoxin domain] + NAD(+) + H(+) = 2 oxidized [nitric oxide reductase rubredoxin domain] + NADH. It functions in the pathway nitrogen metabolism; nitric oxide reduction. In terms of biological role, one of at least two accessory proteins for anaerobic nitric oxide (NO) reductase. Reduces the rubredoxin moiety of NO reductase. In Salmonella arizonae (strain ATCC BAA-731 / CDC346-86 / RSK2980), this protein is Nitric oxide reductase FlRd-NAD(+) reductase.